A 545-amino-acid chain; its full sequence is E3 ubiquitin-protein ligase ipaH9.8 (545 aa).

An interaction with target proteins region spans residues 1–242 (MLPINNNFSL…YHGPRIYFSM (242 aa)). LRR repeat units lie at residues 57 to 77 (NSDE…NLPA), 78 to 99 (QITL…PVTL), 100 to 117 (KKLY…VLPP), 118 to 139 (ALES…PDSL), 140 to 157 (LTMN…SLPQ), 158 to 179 (ALKN…SEGN), 182 to 203 (VVRE…ILNL), and 205 to 228 (NECS…QRLT). The interval 243 to 250 (SDGQQNTL) is linker. An E3 ubiquitin-protein ligase catalytic domain region spans residues 251-545 (HRPLADAVTA…SENGSQLHHS (295 aa)). The NEL domain occupies 253-545 (PLADAVTAWF…SENGSQLHHS (293 aa)). Residue C337 is the Glycyl thioester intermediate of the active site.

This sequence belongs to the LRR-containing bacterial E3 ligase family. In terms of assembly, also interacts with human and mouse U2AF1 (U2AF35). Ubiquitinated in the presence of host E1 ubiquitin-activating enzyme, E2 ubiquitin-conjugating enzyme and ubiquitin.

It is found in the secreted. Its subcellular location is the host cytoplasm. The protein resides in the host nucleus. The catalysed reaction is S-ubiquitinyl-[E2 ubiquitin-conjugating enzyme]-L-cysteine + [acceptor protein]-L-lysine = [E2 ubiquitin-conjugating enzyme]-L-cysteine + N(6)-ubiquitinyl-[acceptor protein]-L-lysine.. Exists in an autoinhibited state in the absence of substrate protein, due to interactions of the leucine-rich repeats with NEL domain. Is activated upon binding to a substrate protein. Functionally, effector E3 ubiquitin ligase that interferes with host's ubiquitination pathway and modulates the acute inflammatory responses, thus facilitating bacterial colonization within the host cell. Interacts with IKBKG (NEMO) and TNIP1 (ABIN-1), a ubiquitin-binding adapter protein, which results in TNIP1-dependent 'Lys-27'-linked polyubiquitination of IKBKG. Consequently, polyubiquitinated IKBKG undergoes proteasome-dependent degradation, which perturbs NF-kappa-B activation during bacterial infection. Mediates polyubiquitination of host U2AF1, leading to its proteasomal degradation. Catalyzes 'Lys-48'-linked polyubiquitination and subsequent degradation of a subset of host guanylate-binding proteins (GBP1, GBP2, GBP4 and GBP6), thereby suppressing host cell defense. In contrast, host GBP3 and GBP7 are not ubiquitinated by IpaH9.8. Uses UBE2D2 (UBCH5B) as an E2 ubiquitin-conjugating enzyme. This is E3 ubiquitin-protein ligase ipaH9.8 (ipaH9.8) from Shigella boydii serotype 18 (strain CDC 3083-94 / BS512).